The chain runs to 693 residues: Alpha-glucosidase (693 aa).

Residues Asp-320 and Glu-323 contribute to the active site. Asp-416 acts as the Proton donor in catalysis.

This sequence belongs to the glycosyl hydrolase 31 family.

It localises to the cytoplasm. The catalysed reaction is Hydrolysis of terminal, non-reducing (1-&gt;4)-linked alpha-D-glucose residues with release of alpha-D-glucose.. Functionally, major soluble alpha-glucosidase. The sequence is that of Alpha-glucosidase (malA) from Saccharolobus solfataricus (strain ATCC 35092 / DSM 1617 / JCM 11322 / P2) (Sulfolobus solfataricus).